The primary structure comprises 569 residues: Acyl-CoA transferase FVEG_12629 (569 aa).

It belongs to the CoA-transferase III family.

In terms of biological role, acyl-CoA transferase; part of the Fusarium detoxification of benzoxazolinone cluster 2 (FDB2) involved in the degradation of benzoxazolinones produced by the host plant. Maize, wheat, and rye produce the 2 benzoxazinone phytoanticipins 2,4-dihy-droxy-7-methoxy-1,4-benzoxazin-3-one (DIMBOA) and 2,4-dihydroxy-1,4-benzoxazin-3-one (DIBOA) that, due to their inherent instability once released, spontaneously degrade to the more stable corresponding benzoxazolinones, 6-methoxy-2-benzoxazolinone (MBOA) and 2-benzoxazolinone (BOA), respectively. The first step in the detoxification of benzoxazolinones involves the hydrolysis of the cyclic ester bond of benzoxazolinones by the FDB1 cluster gamma-lactamase MBL1 to aminophenols. MBL1 is able to convert BOA into 2-aminophenol (2-AP), as well as MBOA into 5-methoxy-2-aminophenol (2-AMP). The FDB2 cluster N-malonyltransferase FDB2/NAT1 then metabolizes aminophenols via N-malonylation to non-toxic malonamic acids. FDB2/NAT1 converts 2-AP into N-(2-hydroxyphenyl) malonamic acid (HPMA) and 2-AMP into N-(2-hydroxy-4-methoxyphenyl) malonamic acid (HMPMA). The duplicated dienlactone hydrolases DLH1 and DLH2 may provide redundant function for hydrolyzing the lactone moiety in the BOA molecule. The roles of the amidases an other enzymes encoded by the 2 FDB clusters have not been identified so far. This is Acyl-CoA transferase FVEG_12629 from Gibberella moniliformis (strain M3125 / FGSC 7600) (Maize ear and stalk rot fungus).